The sequence spans 579 residues: MKDSIRHLIQQALVRLTSEGVLPEGLTPAIQVENTKDKSHGDFASNIAMMLAKPAGMKPRELAEKLIAALPQDAQISKVEIAGPGFLNFFQNSDALAQRLETALADAQLAVHKASAKQRVVIDLSSPNLAKEMHVGHLRSTIIGDAVGRVLEFLGDEVIRQNHVGDWGTQFGMLLAYLEEKPAAAESELADLEQFYRAAKQRFDESPEFADRARELVVKLQAGDAQCLSLWTRFNDISLSHCQKIYDRLNVKLTPADVKGESAYNADLADIVEALREKGLLTEDNGAQCVFLDEFKNAEGNPLPVIVQKAGGGYLYATTDLAAMRYRSQQLHADRVLYFVDQRQALHFQMAFEVARRAGFVHEGMQLEHMGFGTMNGADGRPFKTRDGGTVKLIDLLDEAEQRAYTLVKGKNPELDEAELRQIARAVGISAVKYADLSKHRTSDYRFNFELMLSFEGNTAPYLLYAYTRVASVFRKLGKGIDEISGQIQLDAEQELALAAKLAQFGEVLNSVGEKGEPHLLCAYLYDLAGLFSSFYEHCPILGAEQEAQKQSRLRLAALTGRTLKQGLELLGLEPLERM.

The 'HIGH' region motif lies at 127-137 (PNLAKEMHVGH).

Belongs to the class-I aminoacyl-tRNA synthetase family. In terms of assembly, monomer.

The protein resides in the cytoplasm. It catalyses the reaction tRNA(Arg) + L-arginine + ATP = L-arginyl-tRNA(Arg) + AMP + diphosphate. This is Arginine--tRNA ligase from Stutzerimonas stutzeri (strain A1501) (Pseudomonas stutzeri).